We begin with the raw amino-acid sequence, 495 residues long: Tripartite motif-containing protein 5 (495 aa).

N-acetylalanine is present on A2. An RING-type zinc finger spans residues 15–60; that stretch reads CPICLELLTEPLSLPCGHSFCQACITANHKKSMLYKEEERSCPVCR. The residue at position 87 (S87) is a Phosphoserine. Residues 92–133 form a B box-type zinc finger; that stretch reads QKVDHCARHGEKLLLFCQEDRKVICWLCERSQEHRGHHTFLM. Zn(2+) contacts are provided by C97, H100, C119, and H125. Positions 137–177 form a coiled coil; that stretch reads AQEYHVKLQTALEMLRQKQQEAEKLEADIREEKASWKIQID. The interval 187–200 is required for interaction with GABARAP and for autophagy; the sequence is FEQLREILDWEESN. Residues 283–495 enclose the B30.2/SPRY domain; sequence LKGMLDMFRE…VPMTLCSPSS (213 aa).

It belongs to the TRIM/RBCC family. As to quaternary structure, can form homodimers and homotrimers. In addition to lower-order dimerization, also exhibits a higher-order multimerization and both low- and high-order multimerizations are essential for its restriction activity. Interacts with BTBD1 and BTBD2. Interacts with PSMC4, PSMC5, PSMD7 and HSPA8/HSC70. Interacts (via B30.2/SPRY domain) with HSPA1A/B. Interacts with PSMC2, MAP3K7/TAK1, TAB2 and TAB3. Interacts with SQSTM1. Interacts with TRIM6 and TRIM34. Interacts with ULK1 (phosphorylated form), GABARAP, GABARAPL1, GABARAPL2, MAP1LC3A, MAP1LC3C and BECN1. Post-translationally, degraded in a proteasome-independent fashion in the absence of viral infection but in a proteasome-dependent fashion following exposure to restriction sensitive virus. Autoubiquitinated in a RING finger- and UBE2D2-dependent manner. Monoubiquitinated by TRIM21. Deubiquitinated by Yersinia YopJ. Ubiquitination may not lead to proteasomal degradation.

The protein localises to the cytoplasm. It localises to the nucleus. The enzyme catalyses S-ubiquitinyl-[E2 ubiquitin-conjugating enzyme]-L-cysteine + [acceptor protein]-L-lysine = [E2 ubiquitin-conjugating enzyme]-L-cysteine + N(6)-ubiquitinyl-[acceptor protein]-L-lysine.. Its pathway is protein modification; protein ubiquitination. In terms of biological role, capsid-specific restriction factor that prevents infection from non-host-adapted retroviruses. Blocks viral replication early in the life cycle, after viral entry but before reverse transcription. In addition to acting as a capsid-specific restriction factor, also acts as a pattern recognition receptor that activates innate immune signaling in response to the retroviral capsid lattice. Binding to the viral capsid triggers its E3 ubiquitin ligase activity, and in concert with the heterodimeric ubiquitin conjugating enzyme complex UBE2V1-UBE2N (also known as UBC13-UEV1A complex) generates 'Lys-63'-linked polyubiquitin chains, which in turn are catalysts in the autophosphorylation of the MAP3K7/TAK1 complex (includes TAK1, TAB2, and TAB3). Activation of the MAP3K7/TAK1 complex by autophosphorylation results in the induction and expression of NF-kappa-B and MAPK-responsive inflammatory genes, thereby leading to an innate immune response in the infected cell. Plays a role in regulating autophagy through activation of autophagy regulator BECN1 by causing its dissociation from its inhibitors BCL2 and TAB2. The chain is Tripartite motif-containing protein 5 (TRIM5) from Erythrocebus patas (Red guenon).